Consider the following 117-residue polypeptide: Serine rich endogenous peptide 5 (117 aa).

Residues 1–31 (MATKTSNFVSLRVSLFILLLFISSQVAIADA) form the signal peptide. An SCOOP motif motif is present at residues 41–55 (LQIVRRSRSQRGRQY). Over residues 42–51 (QIVRRSRSQR) the composition is skewed to basic residues. The segment at 42–117 (QIVRRSRSQR…LPYASSPTST (76 aa)) is disordered. A SxS motif essential for MIK2 binding motif is present at residues 47–49 (SRS). A compositionally biased stretch (pro residues) spans 60–84 (LRVPPPPPPPLPQMPSAATPPPMPQ).

As to quaternary structure, interacts with MIK2 (via extracellular leucine-rich repeat domain); this interaction triggers the formation of complex between MIK2 and the BAK1/SERK3 and SERK4 coreceptors, and subsequent BAK1 activation by phosphorylation.

Its subcellular location is the cell membrane. It localises to the secreted. The protein resides in the extracellular space. The protein localises to the apoplast. Functionally, brassicaceae-specific phytocytokine (plant endogenous peptide released into the apoplast) perceived by MIK2 in a BAK1/SERK3 and SERK4 coreceptors-dependent manner, that modulates various physiological and antimicrobial processes including growth prevention and reactive oxygen species (ROS) response regulation. This Arabidopsis thaliana (Mouse-ear cress) protein is Serine rich endogenous peptide 5.